The primary structure comprises 307 residues: Ornithine carbamoyltransferase (307 aa).

Carbamoyl phosphate contacts are provided by residues 50–53 (STRT), Q77, R101, and 128–131 (HPCQ). Residues N160, D224, and 228–229 (SM) each bind L-ornithine. Residues 264-265 (CL) and R292 contribute to the carbamoyl phosphate site.

The protein belongs to the aspartate/ornithine carbamoyltransferase superfamily. OTCase family. As to quaternary structure, homotrimer.

It localises to the cytoplasm. It catalyses the reaction carbamoyl phosphate + L-ornithine = L-citrulline + phosphate + H(+). The protein operates within amino-acid biosynthesis; L-arginine biosynthesis; L-arginine from L-ornithine and carbamoyl phosphate: step 1/3. Reversibly catalyzes the transfer of the carbamoyl group from carbamoyl phosphate (CP) to the N(epsilon) atom of ornithine (ORN) to produce L-citrulline, which is a substrate for argininosuccinate synthetase, the enzyme involved in the final step in arginine biosynthesis. The polypeptide is Ornithine carbamoyltransferase (argF) (Mycobacterium bovis (strain ATCC BAA-935 / AF2122/97)).